The primary structure comprises 258 residues: Aspartate/glutamate leucyltransferase (258 aa).

It belongs to the R-transferase family. Bpt subfamily.

The protein resides in the cytoplasm. It catalyses the reaction N-terminal L-glutamyl-[protein] + L-leucyl-tRNA(Leu) = N-terminal L-leucyl-L-glutamyl-[protein] + tRNA(Leu) + H(+). It carries out the reaction N-terminal L-aspartyl-[protein] + L-leucyl-tRNA(Leu) = N-terminal L-leucyl-L-aspartyl-[protein] + tRNA(Leu) + H(+). Its function is as follows. Functions in the N-end rule pathway of protein degradation where it conjugates Leu from its aminoacyl-tRNA to the N-termini of proteins containing an N-terminal aspartate or glutamate. The sequence is that of Aspartate/glutamate leucyltransferase from Bradyrhizobium diazoefficiens (strain JCM 10833 / BCRC 13528 / IAM 13628 / NBRC 14792 / USDA 110).